The primary structure comprises 202 residues: MILNREFYKRDALEVAKGLLGKILVREIDGVILRGKIVETEAYIGSIDKASHAYNGRRTERTEPLFKEGGIAYVYFIYGLYHCFNVISGENDDGQGVLIRALEPLDNFDYISLKRFNKKFEELSTVKKRDLTNGPSKLCMAFEIDKKDNYKVLYEKGDLYIEDSCDNYDITQTTRIGIDYAEEAIDFPWRFYIKDNKYISKK.

The protein belongs to the DNA glycosylase MPG family.

This is Putative 3-methyladenine DNA glycosylase from Clostridium botulinum (strain Alaska E43 / Type E3).